Here is a 61-residue protein sequence, read N- to C-terminus: Large ribosomal subunit protein uL30 (61 aa).

It belongs to the universal ribosomal protein uL30 family. Part of the 50S ribosomal subunit.

The chain is Large ribosomal subunit protein uL30 from Jannaschia sp. (strain CCS1).